The primary structure comprises 579 residues: Tricyclene synthase 0e23, chloroplastic (579 aa).

Residues 1-66 (MAFCISYLGA…ALCLNAHSTS (66 aa)) constitute a chloroplast transit peptide. 3 N-linked (GlcNAc...) asparagine glycosylation sites follow: asparagine 27, asparagine 204, and asparagine 317. Aspartate 336 and aspartate 340 together coordinate Mg(2+). The DDXXD motif motif lies at 336-340 (DDIFD). N-linked (GlcNAc...) asparagine glycosylation is found at asparagine 382 and asparagine 463. The Mg(2+) site is built by asparagine 480 and glutamate 488. An N-linked (GlcNAc...) asparagine glycan is attached at asparagine 507.

It belongs to the terpene synthase family. Tpsg subfamily. The cofactor is Mg(2+). Requires Mn(2+) as cofactor. Accumulates in flowers; mostly expressed in both upper and lower petal lobes, and, to a lower extent, in tube and stamens.

Its subcellular location is the plastid. The protein localises to the chloroplast stroma. The enzyme catalyses (2E)-geranyl diphosphate = tricyclene + diphosphate. The catalysed reaction is (2E)-geranyl diphosphate = (E)-beta-ocimene + diphosphate. It functions in the pathway secondary metabolite biosynthesis; terpenoid biosynthesis. Functionally, contributes to floral scent emission. The sequence is that of Tricyclene synthase 0e23, chloroplastic (0e23) from Antirrhinum majus (Garden snapdragon).